Here is a 495-residue protein sequence, read N- to C-terminus: Acetyl-coenzyme A carboxylase carboxyl transferase subunit beta, chloroplastic (495 aa).

Positions 187 to 208 (ESRNSSENEGSSRRTRTKGSDL) are disordered. A CoA carboxyltransferase N-terminal domain is found at 226 to 495 (LWVQCENCYG…PLNQKSSKIK (270 aa)). Residues cysteine 230, cysteine 233, cysteine 249, and cysteine 252 each contribute to the Zn(2+) site. The segment at 230–252 (CENCYGLNYKKFLKSKMNICEQC) adopts a C4-type zinc-finger fold.

It belongs to the AccD/PCCB family. Acetyl-CoA carboxylase is a heterohexamer composed of biotin carboxyl carrier protein, biotin carboxylase and 2 subunits each of ACCase subunit alpha and ACCase plastid-coded subunit beta (accD). It depends on Zn(2+) as a cofactor. RNA expressed in leaf, root and stem; the least expression occurs in stems.

The protein localises to the plastid. It localises to the chloroplast stroma. It catalyses the reaction N(6)-carboxybiotinyl-L-lysyl-[protein] + acetyl-CoA = N(6)-biotinyl-L-lysyl-[protein] + malonyl-CoA. Its pathway is lipid metabolism; malonyl-CoA biosynthesis; malonyl-CoA from acetyl-CoA: step 1/1. Functionally, component of the acetyl coenzyme A carboxylase (ACC) complex. Biotin carboxylase (BC) catalyzes the carboxylation of biotin on its carrier protein (BCCP) and then the CO(2) group is transferred by the transcarboxylase to acetyl-CoA to form malonyl-CoA. The chain is Acetyl-coenzyme A carboxylase carboxyl transferase subunit beta, chloroplastic from Nicotiana tabacum (Common tobacco).